The primary structure comprises 63 residues: Small ribosomal subunit protein eS17 (63 aa).

It belongs to the eukaryotic ribosomal protein eS17 family.

The protein is Small ribosomal subunit protein eS17 of Methanococcus maripaludis (strain DSM 14266 / JCM 13030 / NBRC 101832 / S2 / LL).